The primary structure comprises 292 residues: Oxidative stress-responsive serine-rich protein 1 (292 aa).

The disordered stretch occupies residues 24 to 178 (ASGSVASLSV…ATQVPQASLK (155 aa)). The segment covering 65–83 (STRKSSRGAVRTQRRRRSK) has biased composition (basic residues). Residues Thr-143 and Thr-233 each carry the phosphothreonine modification.

In Homo sapiens (Human), this protein is Oxidative stress-responsive serine-rich protein 1 (OSER1).